A 337-amino-acid chain; its full sequence is D-alanine--D-alanine ligase (337 aa).

The region spanning 124 to 330 (KMWFSALGIP…FTEYLSLVIN (207 aa)) is the ATP-grasp domain. 154–209 (ALAQWGSIFVKAASQGSSVGCYKVDDSDKVAGVLKDAFGYAPYVIVEKTIKARELE) lines the ATP pocket. Mg(2+) contacts are provided by Asp284, Glu297, and Asn299.

This sequence belongs to the D-alanine--D-alanine ligase family. Mg(2+) serves as cofactor. Mn(2+) is required as a cofactor.

It is found in the cytoplasm. It carries out the reaction 2 D-alanine + ATP = D-alanyl-D-alanine + ADP + phosphate + H(+). Its pathway is cell wall biogenesis; peptidoglycan biosynthesis. In terms of biological role, cell wall formation. This is D-alanine--D-alanine ligase from Shewanella baltica (strain OS195).